Here is a 77-residue protein sequence, read N- to C-terminus: Small ribosomal subunit protein bS16c (77 aa).

This sequence belongs to the bacterial ribosomal protein bS16 family.

It is found in the plastid. The protein localises to the cyanelle. In Cyanophora paradoxa, this protein is Small ribosomal subunit protein bS16c.